Reading from the N-terminus, the 289-residue chain is Diaminopimelate epimerase (289 aa).

Positions 13, 47, and 67 each coordinate substrate. C76 serves as the catalytic Proton donor. Residues 77–78 (GN), N167, N200, and 218–219 (ER) each bind substrate. C227 functions as the Proton acceptor in the catalytic mechanism. Substrate is bound at residue 228-229 (GT).

The protein belongs to the diaminopimelate epimerase family. Homodimer.

It localises to the cytoplasm. The enzyme catalyses (2S,6S)-2,6-diaminopimelate = meso-2,6-diaminopimelate. Its pathway is amino-acid biosynthesis; L-lysine biosynthesis via DAP pathway; DL-2,6-diaminopimelate from LL-2,6-diaminopimelate: step 1/1. Catalyzes the stereoinversion of LL-2,6-diaminopimelate (L,L-DAP) to meso-diaminopimelate (meso-DAP), a precursor of L-lysine and an essential component of the bacterial peptidoglycan. The sequence is that of Diaminopimelate epimerase from Burkholderia pseudomallei (strain 668).